The following is a 191-amino-acid chain: Large ribosomal subunit protein uL3 (191 aa).

Residues 115-137 (GGPASHGSRFHRRHGSIGNREWP) form a disordered region.

It belongs to the universal ribosomal protein uL3 family. As to quaternary structure, part of the 50S ribosomal subunit. Forms a cluster with proteins L14 and L19.

In terms of biological role, one of the primary rRNA binding proteins, it binds directly near the 3'-end of the 23S rRNA, where it nucleates assembly of the 50S subunit. In Campylobacter jejuni subsp. jejuni serotype O:2 (strain ATCC 700819 / NCTC 11168), this protein is Large ribosomal subunit protein uL3 (rplC).